We begin with the raw amino-acid sequence, 194 residues long: Dof zinc finger protein DOF4.2 (194 aa).

A Dof-type zinc finger spans residues 21–75 (RVCPRCYSDQTRFSYFNNNKKSQPRYKCKNCCRCWTHGGVLRNIPVTGICDKSNL). Zn(2+) contacts are provided by C23, C26, C48, and C51.

Its subcellular location is the nucleus. In terms of biological role, transcription factor that binds specifically to a 5'-AA[AG]G-3' consensus core sequence. This Arabidopsis thaliana (Mouse-ear cress) protein is Dof zinc finger protein DOF4.2 (DOF4.2).